The primary structure comprises 428 residues: MLLSRFQQQLTQHFPQQPNVLLSLSGGIDSVVLLDLFSRTTTPLRAIYIHHGLSANADNWADFCEALCKQYNIPFILQKVTVDKSTGIEAGARTARYKAIAEHIQANEILATAHHLNDQAETFLLALKRGSGVKGLSAMQIVSHRQNMTIFRPLLSTTKKEIQQYAKQQQLCWIEDESNQNNHYDRNFLRNQILPLLLQRWPQFNQMIARSAKHCTAQQQLLAELLDEELHRYANIDEKSLQISQFKHFSPLKQQQLIRLWLAKCDIPMPTSAQFEQIISGFLNSATDKHPQLRLKNWTLRRFQKTLYLTPQLANTQHFCQILSVNQTIDLPDNLGQLTRQPQQIIYQQTHKTNRLLLPESLRTVPLTIKLHQTGKVKRYQHPHSEEMKKLYQQAKIPVWQRTRTILVFFEDQLVDLLTQHKNQQNND.

ATP is bound at residue 25–30; it reads SGGIDS.

It belongs to the tRNA(Ile)-lysidine synthase family.

The protein resides in the cytoplasm. It carries out the reaction cytidine(34) in tRNA(Ile2) + L-lysine + ATP = lysidine(34) in tRNA(Ile2) + AMP + diphosphate + H(+). In terms of biological role, ligates lysine onto the cytidine present at position 34 of the AUA codon-specific tRNA(Ile) that contains the anticodon CAU, in an ATP-dependent manner. Cytidine is converted to lysidine, thus changing the amino acid specificity of the tRNA from methionine to isoleucine. This chain is tRNA(Ile)-lysidine synthase, found in Haemophilus ducreyi (strain 35000HP / ATCC 700724).